We begin with the raw amino-acid sequence, 235 residues long: MPKHSKRYNEIRKLVDSEKAYTLDEAVELLKKTATAKFDETVEFHIKTNIDYRKSEQNIRSTISLPHGTGKSVRVLVFAKGEKAEEAKQAGADYVGAEELADKIANEGFVDFDVAIATPDMMKVIGKLGKVLGPRGLMPNPKTGTVTEDIAAAVSEFKKGKVEVRTDKTGNLHFPVGKASFEPDKLKENIKSAYEQILSLRPAGVKGHFIKKAVVATTMGPGIKLDLNVLAEGKR.

It belongs to the universal ribosomal protein uL1 family. In terms of assembly, part of the 50S ribosomal subunit.

In terms of biological role, binds directly to 23S rRNA. The L1 stalk is quite mobile in the ribosome, and is involved in E site tRNA release. Protein L1 is also a translational repressor protein, it controls the translation of the L11 operon by binding to its mRNA. The sequence is that of Large ribosomal subunit protein uL1 from Fervidobacterium nodosum (strain ATCC 35602 / DSM 5306 / Rt17-B1).